The primary structure comprises 313 residues: Olfactory receptor 4M1 (313 aa).

At 1–25 (METANYTKVTEFVLTGLSQTREVQL) the chain is on the extracellular side. An N-linked (GlcNAc...) asparagine glycan is attached at Asn-5. The chain crosses the membrane as a helical span at residues 26-49 (VLFVIFLSFYLFILPGNILIICTI). Over 50-57 (RLDPHLTS) the chain is Cytoplasmic. Residues 58 to 79 (PMYFLLANLALLDIWYSSITAP) form a helical membrane-spanning segment. Residues 80–100 (KMLIDFFVERKIISFGGCIAQ) are Extracellular-facing. The cysteines at positions 97 and 189 are disulfide-linked. Residues 101–120 (LFFLHFVGASEMFLLTVMAY) traverse the membrane as a helical segment. Residues 121 to 139 (DRYAAICRPLHYATIMNRR) lie on the Cytoplasmic side of the membrane. The helical transmembrane segment at 140-158 (LCCILVALSWMGGFIHSII) threads the bilayer. Over 159–195 (QVALIVRLPFCGPNELDSYFCDITQVVRIACANTFPE) the chain is Extracellular. Residues 196–219 (ELVMICSSGLISVVCFIALLMSYA) traverse the membrane as a helical segment. At 220 to 237 (FLLALLKKHSGSGENTNR) the chain is on the cytoplasmic side. The helical transmembrane segment at 238 to 260 (AMSTCYSHITIVVLMFGPSIYIY) threads the bilayer. Residues 261–271 (ARPFDSFSLDK) lie on the Extracellular side of the membrane. The helical transmembrane segment at 272 to 291 (VVSVFHTVIFPLLNPIIYTL) threads the bilayer. Topologically, residues 292–313 (RNKEVKAAMRKVVTKYILCEEK) are cytoplasmic.

It belongs to the G-protein coupled receptor 1 family. In terms of tissue distribution, highly expressed in the testis and olfactory bulb.

The protein resides in the cell membrane. Functionally, olfactory receptor that acts as a receptor of Asprosin hormone, potentially at the surface of hepatocytes and may help to promote hepatocyte glucose release. The polypeptide is Olfactory receptor 4M1 (Homo sapiens (Human)).